The sequence spans 831 residues: Phenylalanine--tRNA ligase beta subunit (831 aa).

In terms of domain architecture, tRNA-binding spans 44 to 155; that stretch reads GPVDGPVTVG…GAAEPGADGA (112 aa). Positions 414–489 constitute a B5 domain; that stretch reads WSPPPIRMGV…RLEGLEVIPS (76 aa). Residues Asp467, Asp473, Glu476, and Glu477 each contribute to the Mg(2+) site. Residues 737–830 enclose the FDX-ACB domain; that stretch reads SPYPAVFQDV…AAERVGAVLR (94 aa).

The protein belongs to the phenylalanyl-tRNA synthetase beta subunit family. Type 1 subfamily. Tetramer of two alpha and two beta subunits. Mg(2+) is required as a cofactor.

Its subcellular location is the cytoplasm. It catalyses the reaction tRNA(Phe) + L-phenylalanine + ATP = L-phenylalanyl-tRNA(Phe) + AMP + diphosphate + H(+). The protein is Phenylalanine--tRNA ligase beta subunit (pheT) of Mycobacterium tuberculosis (strain ATCC 25618 / H37Rv).